A 1169-amino-acid polypeptide reads, in one-letter code: Protein MBD-R2 (1169 aa).

The THAP-type zinc finger occupies 5 to 59 (CCVANCPSTSRLLEHNGVTYHSFPLDPIIRAIWIKNSRISLERQITKSVLVCSRH). Disordered regions lie at residues 99–122 (RALQHASVEGTTETPGNAQSSTND), 140–211 (SAER…KYSN), and 347–394 (AEEG…CAPQ). Residues 107 to 122 (EGTTETPGNAQSSTND) are compositionally biased toward polar residues. The segment covering 140-160 (SAERKATEEGKTGKAADDVKN) has biased composition (basic and acidic residues). Residues 190 to 202 (PAPGSASSSNSPL) are compositionally biased toward low complexity. Polar residues predominate over residues 353-363 (KSPTPVGTPVS). In terms of domain architecture, MBD spans 445–514 (KPTVIVQDWR…DVYDFSIHRR (70 aa)). The segment at 527–565 (GYNPQPPPKPRPMDVSMNSTLDQSITSQHSLPSTPMPVK) is disordered. Residues 542–559 (SMNSTLDQSITSQHSLPS) are compositionally biased toward polar residues. A C2H2-type zinc finger spans residues 640–665 (YVCPREDCAKTYRKEDFLLIHIRHYH). A disordered region spans residues 714-890 (QDLQQSRSFK…INAALAPPPA (177 aa)). Residues 726-742 (SVSATATSSTPSDITPT) are compositionally biased toward low complexity. The span at 774–784 (PTQSFNPSLSR) shows a compositional bias: polar residues. Basic residues predominate over residues 798-810 (SGSRKSNRQRSQR). 2 stretches are compositionally biased toward polar residues: residues 853–862 (AATTPISSID) and 869–881 (SVSTPSSNDQTDI).

As to quaternary structure, component of the non-specific lethal (NLS) histone acetyltransferase complex at least composed of mof, nls1, dgt1/NSL2, Rcd1/NSL3, Rcd5/MCRS2, MBD-R2 and wds.

It localises to the nucleus. Its subcellular location is the chromosome. Functionally, component of the non-specific lethal (NLS) complex, a multiprotein complex that promotes expression of housekeeping genes on X chromosome and autosomes. This is Protein MBD-R2 from Drosophila melanogaster (Fruit fly).